A 358-amino-acid polypeptide reads, in one-letter code: Peptide chain release factor 1 (358 aa).

An N5-methylglutamine modification is found at Q234. The tract at residues 283 to 306 (ERLHSERAGQRKSMVGSGDRSERI) is disordered.

This sequence belongs to the prokaryotic/mitochondrial release factor family. Post-translationally, methylated by PrmC. Methylation increases the termination efficiency of RF1.

Its subcellular location is the cytoplasm. In terms of biological role, peptide chain release factor 1 directs the termination of translation in response to the peptide chain termination codons UAG and UAA. The sequence is that of Peptide chain release factor 1 from Zymomonas mobilis subsp. mobilis (strain ATCC 31821 / ZM4 / CP4).